We begin with the raw amino-acid sequence, 403 residues long: Chalcone synthase 3 (403 aa).

Cys170 is a catalytic residue.

This sequence belongs to the thiolase-like superfamily. Chalcone/stilbene synthases family.

It catalyses the reaction (E)-4-coumaroyl-CoA + 3 malonyl-CoA + 3 H(+) = 2',4,4',6'-tetrahydroxychalcone + 3 CO2 + 4 CoA. The protein operates within secondary metabolite biosynthesis; flavonoid biosynthesis. Its function is as follows. The primary product of this enzyme is 4,2',4',6'-tetrahydroxychalcone (also termed naringenin-chalcone or chalcone) which can under specific conditions spontaneously isomerize into naringenin. This Gerbera hybrida (Daisy) protein is Chalcone synthase 3 (CHS3).